An 852-amino-acid polypeptide reads, in one-letter code: Chitin synthase 1 (852 aa).

2 disordered regions span residues 27–46 (EDQD…TNYA) and 53–97 (SSLR…QANG). Polar residues predominate over residues 53 to 74 (SSLRSQKSANKPTTAQNRNSAA). Helical transmembrane passes span 492 to 509 (RWLN…IHFR), 532 to 552 (VISL…FYFI), 572 to 592 (IFDF…ICSM), 601 to 621 (FLFM…LFCS), 686 to 706 (FLPY…YAFC), 787 to 807 (THLV…ITTS), and 830 to 850 (CGLG…GIFT).

Belongs to the chitin synthase family. Class II subfamily.

It is found in the cell membrane. It catalyses the reaction [(1-&gt;4)-N-acetyl-beta-D-glucosaminyl](n) + UDP-N-acetyl-alpha-D-glucosamine = [(1-&gt;4)-N-acetyl-beta-D-glucosaminyl](n+1) + UDP + H(+). In terms of biological role, polymerizes chitin, a structural polymer of the cell wall and septum, by transferring the sugar moiety of UDP-GlcNAc to the non-reducing end of the growing chitin polymer. The chain is Chitin synthase 1 (CHS1) from Mucor circinelloides f. lusitanicus (Mucor racemosus var. lusitanicus).